A 630-amino-acid polypeptide reads, in one-letter code: DNA mismatch repair protein MutL (630 aa).

Belongs to the DNA mismatch repair MutL/HexB family.

This protein is involved in the repair of mismatches in DNA. It is required for dam-dependent methyl-directed DNA mismatch repair. May act as a 'molecular matchmaker', a protein that promotes the formation of a stable complex between two or more DNA-binding proteins in an ATP-dependent manner without itself being part of a final effector complex. This Lactobacillus johnsonii (strain CNCM I-12250 / La1 / NCC 533) protein is DNA mismatch repair protein MutL.